We begin with the raw amino-acid sequence, 173 residues long: RNA pyrophosphohydrolase (173 aa).

Residues 11-164 (PYRKCVGILV…KKHVYTQVVK (154 aa)) form the Nudix hydrolase domain. A Nudix box motif is present at residues 52–73 (GGINQGEKPIDAARRELYEETG).

The protein belongs to the Nudix hydrolase family. RppH subfamily. The cofactor is a divalent metal cation.

In terms of biological role, accelerates the degradation of transcripts by removing pyrophosphate from the 5'-end of triphosphorylated RNA, leading to a more labile monophosphorylated state that can stimulate subsequent ribonuclease cleavage. The chain is RNA pyrophosphohydrolase from Bartonella clarridgeiae.